The chain runs to 378 residues: Probable selenide, water dikinase (378 aa).

Residue cysteine 33 is part of the active site. ATP-binding positions include lysine 36, 63-65 (GLD), aspartate 83, aspartate 106, and 158-160 (GQT). Aspartate 65 lines the Mg(2+) pocket. Mg(2+) is bound at residue aspartate 106. Aspartate 260 lines the Mg(2+) pocket.

Belongs to the selenophosphate synthase 1 family. Class I subfamily. In terms of assembly, homodimer. Requires Mg(2+) as cofactor.

It catalyses the reaction hydrogenselenide + ATP + H2O = selenophosphate + AMP + phosphate + 2 H(+). In terms of biological role, synthesizes selenophosphate from selenide and ATP. The protein is Probable selenide, water dikinase (seld-1) of Caenorhabditis elegans.